The primary structure comprises 586 residues: MAATRNLSLLAQSSQPWAGIYGSHGSPRPISSWLRRQSIAKTSYICMCTPLSMSQLIATPLITDIESLLKYLRQPQVLPHEIDDSTKRRELLERTRRELQTTLEPLQAMKMIDTLQRLGLAYHFEDDINSLLTGFSNGQPDEDLLTASLRFRLLRHNGHRINPNIFQKFMDKQGKFIDSLKEDTRGLFSLYEASYLGANGEDILLQALEFTKAHLKESLPSLAPPLAKKVSQALELPRHRRMARLEARRYIEEYGGENGHSPDLLELAKLDYNKVQSLHQLELSEISRWWKQLGLVDKLTFARDRPLECFLWTVGILPEPKYSSCRIELAKTIAILLVIDDIFDTHGTLDELILFTNAIRRWDLEAMEDLPEYMRICYMALYNTTNEICYKILKQNGWSVLPYLKATWIDMIEGFMLEASWLNTGYVPNMEEYVENGVTTAGAYMALVHLFFLIGQGVTEENVKLLVKPYPKLFSYSGRILRLWDDLGTAKEEQERGDLASSIDLFMRENNITSDEEGRKCILKIIDNLWKELNGELVSRHALPLAIIKAAFNMARASQVVYQHEEDSYFSSVDNYVQALFFTPFN.

Residues 1-47 (MAATRNLSLLAQSSQPWAGIYGSHGSPRPISSWLRRQSIAKTSYICM) constitute a chloroplast transit peptide. Mg(2+) is bound by residues aspartate 340, aspartate 344, aspartate 485, threonine 489, and glutamate 493. The DDXXD motif motif lies at 340–344 (DDIFD).

The protein belongs to the terpene synthase family. Tpsg subfamily. As to quaternary structure, monomer. Mg(2+) serves as cofactor.

It is found in the plastid. Its subcellular location is the chloroplast. It carries out the reaction (2E)-geranyl diphosphate + H2O = (2E)-geraniol + diphosphate. It functions in the pathway secondary metabolite biosynthesis; terpenoid biosynthesis. In terms of biological role, monoterpene synthase involved in the biosynthesis of volatile organic compounds. Mediates the conversion of (2E)-geranyl diphosphate (GPP) into the acyclic monoterpene, geraniol. Does not use (2E,6E)-farnesyl diphosphate (FPP) as substrate. The chain is Monoterpene synthase TPS4, chloroplastic from Cananga odorata (Ylang-ylang tree).